Reading from the N-terminus, the 758-residue chain is ATP-dependent RNA helicase dbp7 (758 aa).

Disordered regions lie at residues 26–99 and 111–130; these read GGTW…QPRQ and PQKVEEVKEEGHVEDAKPTN. A compositionally biased stretch (basic residues) spans 35–45; sequence AKKIAKHHAKG. The segment covering 84-99 has biased composition (polar residues); the sequence is GKQQSHTHPHSNQPRQ. Over residues 111–127 the composition is skewed to basic and acidic residues; the sequence is PQKVEEVKEEGHVEDAK. The short motif at 138-167 is the Q motif element; sequence DTFTNLGLSPSLAAHLLTKLELKAPTAIQK. The Helicase ATP-binding domain maps to 171–372; that stretch reads SQLLKEEGDA…EISLKDAVHI (202 aa). 184–191 serves as a coordination point for ATP; it reads AETGSGKT. Residues 308-311 carry the DEAD box motif; sequence DEGD. The 206-residue stretch at 398 to 603 folds into the Helicase C-terminal domain; the sequence is QLKQSYAVVA…ALTRADANDI (206 aa). 2 disordered regions span residues 455–483 and 691–758; these read KEDGDESSDTDKSEDKPPSSPHGTIAPAT and VPGL…FNLA. Residues 696-709 are compositionally biased toward basic and acidic residues; the sequence is QGKEETKKDFKAER.

This sequence belongs to the DEAD box helicase family. DDX31/DBP7 subfamily.

It localises to the nucleus. The protein resides in the nucleolus. The catalysed reaction is ATP + H2O = ADP + phosphate + H(+). ATP-binding RNA helicase involved in the biogenesis of 60S ribosomal subunits and is required for the normal formation of 25S and 5.8S rRNAs. The sequence is that of ATP-dependent RNA helicase dbp7 (dbp7) from Neosartorya fischeri (strain ATCC 1020 / DSM 3700 / CBS 544.65 / FGSC A1164 / JCM 1740 / NRRL 181 / WB 181) (Aspergillus fischerianus).